A 571-amino-acid chain; its full sequence is Zinc metalloproteinase nas-15 (571 aa).

The N-terminal stretch at 1-15 (MREYVLIFLVAPVFA) is a signal peptide. An N-linked (GlcNAc...) asparagine glycan is attached at Asn-92. Positions 114 to 307 (NAIKNRLQLW…FKINTLYGCP (194 aa)) constitute a Peptidase M12A domain. Cystine bridges form between Cys-156-Cys-306, Cys-178-Cys-197, Cys-354-Cys-388, Cys-361-Cys-381, and Cys-370-Cys-385. His-205 is a binding site for Zn(2+). Residue Glu-206 is part of the active site. Zn(2+) is bound by residues His-209 and His-215. The 35-residue stretch at 354–388 (CRNLRGDCDDLAKQGWCIRNPGWMRANCPISCGMC) folds into the ShKT 1 domain. The span at 407–420 (TTTARPQKPVTQPI) shows a compositional bias: low complexity. A disordered region spans residues 407 to 426 (TTTARPQKPVTQPIQPLPPV). Intrachain disulfides connect Cys-437/Cys-471, Cys-444/Cys-464, and Cys-453/Cys-468. The region spanning 437–471 (CEDLRVDCLVLVSQRYCKISQNFMKSYCAKSCGFC) is the ShKT 2 domain. A disordered region spans residues 500 to 530 (IRSRSPAPPVSTTTKAAPTTSTTSAAPYSPT). Positions 509-527 (VSTTTKAAPTTSTTSAAPY) are enriched in low complexity. Intrachain disulfides connect Cys-536-Cys-571, Cys-543-Cys-564, and Cys-552-Cys-568. The 36-residue stretch at 536-571 (CSDRKHFCSHWKSAGFCEGIFMNYMKKNCPASCGLC) folds into the ShKT 3 domain.

Zn(2+) serves as cofactor. In terms of tissue distribution, expressed in pharyngeal marginal cells and muscles.

The protein localises to the secreted. Metalloprotease. In Caenorhabditis elegans, this protein is Zinc metalloproteinase nas-15 (nas-15).